Consider the following 282-residue polypeptide: [PSI+] induction protein 2 (282 aa).

The helical transmembrane segment at 43-63 (IIAIVGIVLACILVIWLIGGL) threads the bilayer. Residues Asn91 and Asn132 are each glycosylated (N-linked (GlcNAc...) asparagine). At Thr141 the chain carries Phosphothreonine. Disordered regions lie at residues 153–183 (FDLE…VAPL) and 246–282 (LQGN…DRYY). Polar residues predominate over residues 253 to 282 (TPSSNHRSPYPTENYQSYQGYKPNQSDRYY). A glycan (N-linked (GlcNAc...) asparagine) is linked at Asn276.

It localises to the membrane. Not known. Seems to be able to provoque the non-Mendelian trait [PIN(+)] which is required for the de novo appearance of the [PSI(+)] prion. The polypeptide is [PSI+] induction protein 2 (PIN2) (Saccharomyces cerevisiae (strain ATCC 204508 / S288c) (Baker's yeast)).